Here is a 236-residue protein sequence, read N- to C-terminus: MTLYPAIDLKDGKAVRLTKGLMDSAKIYSDEPWMLVKKFEEMGAKWVHLVDLNGAFAGEPKNLEQIIKIRQNCKVKLELGGGIRDEDTIKKMLEIGIDRVILGSIAVKNPTFVKEMAAKYPIAVGIDAIDGFVAVEGWGEVSAMRATDLAKEFANAGVEAIICTDVSRDGTLSGVNVEFTLDIANACKIPTIASGGVKDESDIEALVSAKGIDGVIIGKAYYEGTLDLPKMFKKYS.

D8 acts as the Proton acceptor in catalysis. The active-site Proton donor is the D127.

This sequence belongs to the HisA/HisF family.

The protein resides in the cytoplasm. The enzyme catalyses 1-(5-phospho-beta-D-ribosyl)-5-[(5-phospho-beta-D-ribosylamino)methylideneamino]imidazole-4-carboxamide = 5-[(5-phospho-1-deoxy-D-ribulos-1-ylimino)methylamino]-1-(5-phospho-beta-D-ribosyl)imidazole-4-carboxamide. It functions in the pathway amino-acid biosynthesis; L-histidine biosynthesis; L-histidine from 5-phospho-alpha-D-ribose 1-diphosphate: step 4/9. This chain is 1-(5-phosphoribosyl)-5-[(5-phosphoribosylamino)methylideneamino] imidazole-4-carboxamide isomerase, found in Sulfurimonas denitrificans (strain ATCC 33889 / DSM 1251) (Thiomicrospira denitrificans (strain ATCC 33889 / DSM 1251)).